Reading from the N-terminus, the 216-residue chain is 3-isopropylmalate dehydratase small subunit (216 aa).

Belongs to the LeuD family. LeuD type 1 subfamily. In terms of assembly, heterodimer of LeuC and LeuD.

It carries out the reaction (2R,3S)-3-isopropylmalate = (2S)-2-isopropylmalate. The protein operates within amino-acid biosynthesis; L-leucine biosynthesis; L-leucine from 3-methyl-2-oxobutanoate: step 2/4. In terms of biological role, catalyzes the isomerization between 2-isopropylmalate and 3-isopropylmalate, via the formation of 2-isopropylmaleate. In Methylibium petroleiphilum (strain ATCC BAA-1232 / LMG 22953 / PM1), this protein is 3-isopropylmalate dehydratase small subunit.